The primary structure comprises 984 residues: MCVPAKQGTLHAKSPLPGLKIAGLLLRPRAANASSVDPRVIIYLERLLALKKVDASDVLSSAFQYSKDRLPKTGDDGSSKDSGWHNPPELEEVVFHRLSKAFQAEERPVNSTEGLRTLVVVTRWMQTMVTSHTSDTMIQAMAGIQQQPQQQSINVREGLGMLVVGVIENQKMLNILNKHHIKNCKSPGRSRKSNTTFTTNLATGEWRSERRSRTETQDLKSLRSNFEAVDWIFPTINTRAGLYIFLNSLIDSQNMATDLITAAFDILANAMYRSEPSQNMFCLKSFLINKIPILLLQISSSMFPMTAELSITQALSHVDPNAFPAFSQGFDDMLGNTNSLADVRQDFLNACALHGLITTATVERLLGETPMQGPPGTKYDKSTLLEQCKSNFDKISMYIDELDNLDGNAGAIVGAIAEFIPHLCETQMTMYLKQLSSLLFKKPQAIDVILQFTSPASILRPLCQILDDWHYDSDQGEYQPVYDEFGAVLVLVMTFMYRYDLTYHDIGIGAESFVARLMTKGNQSMLPDEMTDEQSKHLGHWLKGLYDAGNEGLSNDVFASCSPREFYFIVPTLFKQTVMALSAGILTFESVKGGLEYLMETFLLPSLIGGLIWMSSYALIQSHSDLDAIMRIFREVISSAPSSGDAQAMHSTILSIVSSRLEKCLRTIQRRDASRANSIEPLIQAIKGNLHSERSMFASMKELEQWTNAPNSTLHTSLRHTVQQLSQWASTSSIQPNPPSYTHRQVYVSLKIMGASKVIKAIVDELKAQTEASNGAAALDVGVSIICAPTVDDSPVPVAWLSSPIPASNPPRTRLNLREMLKHEFDNAAALVATDPLAAETVVRLHRRVEAQLSSIAENALQGHGSVLNLPNVNMGDMQSQSIPDDITKAIDDAAAASIADDITTMDNKALQRSMDDLTGPDGLDLSSIGMGTGDAGTGDMGAELGNLPDLDLGDMSGMGMDMDMDMAMGGGGDDDWGLDFDNM.

It belongs to the Mediator complex subunit 5 family. As to quaternary structure, component of the Mediator complex.

It localises to the nucleus. Functionally, component of the Mediator complex, a coactivator involved in the regulated transcription of nearly all RNA polymerase II-dependent genes. Mediator functions as a bridge to convey information from gene-specific regulatory proteins to the basal RNA polymerase II transcription machinery. Mediator is recruited to promoters by direct interactions with regulatory proteins and serves as a scaffold for the assembly of a functional preinitiation complex with RNA polymerase II and the general transcription factors. The chain is Mediator of RNA polymerase II transcription subunit 5 (NUT1) from Phaeosphaeria nodorum (strain SN15 / ATCC MYA-4574 / FGSC 10173) (Glume blotch fungus).